We begin with the raw amino-acid sequence, 53 residues long: ATP synthase protein 8 (53 aa).

Residues 9–29 form a helical membrane-spanning segment; that stretch reads WIFFLFFFICIFLIFNIMNYF.

This sequence belongs to the ATPase protein 8 family. In terms of assembly, F-type ATPases have 2 components, CF(1) - the catalytic core - and CF(0) - the membrane proton channel.

Its subcellular location is the mitochondrion membrane. Mitochondrial membrane ATP synthase (F(1)F(0) ATP synthase or Complex V) produces ATP from ADP in the presence of a proton gradient across the membrane which is generated by electron transport complexes of the respiratory chain. F-type ATPases consist of two structural domains, F(1) - containing the extramembraneous catalytic core and F(0) - containing the membrane proton channel, linked together by a central stalk and a peripheral stalk. During catalysis, ATP synthesis in the catalytic domain of F(1) is coupled via a rotary mechanism of the central stalk subunits to proton translocation. Part of the complex F(0) domain. Minor subunit located with subunit a in the membrane. This Bombyx mori (Silk moth) protein is ATP synthase protein 8 (mt:ATPase8).